The chain runs to 417 residues: Cytoplasmic tRNA 2-thiolation protein 2 (417 aa).

Over residues 1–11 (MCSIVEDDFGD) the composition is skewed to acidic residues. Residues 1-24 (MCSIVEDDFGDEGGAHAMKEDTPQ) form a disordered region. Basic and acidic residues predominate over residues 13–22 (GGAHAMKEDT).

This sequence belongs to the CTU2/NCS2 family.

The protein localises to the cytoplasm. It functions in the pathway tRNA modification; 5-methoxycarbonylmethyl-2-thiouridine-tRNA biosynthesis. Its function is as follows. Plays a central role in 2-thiolation of mcm(5)S(2)U at tRNA wobble positions of tRNA(Lys), tRNA(Glu) and tRNA(Gln). May act by forming a heterodimer with NCS6/CTU1 that ligates sulfur from thiocarboxylated URM1 onto the uridine of tRNAs at wobble position. The polypeptide is Cytoplasmic tRNA 2-thiolation protein 2 (Anopheles gambiae (African malaria mosquito)).